A 431-amino-acid polypeptide reads, in one-letter code: Glutamate-1-semialdehyde 2,1-aminomutase 1 (431 aa).

The residue at position 268 (lysine 268) is an N6-(pyridoxal phosphate)lysine.

This sequence belongs to the class-III pyridoxal-phosphate-dependent aminotransferase family. HemL subfamily. As to quaternary structure, homodimer. Requires pyridoxal 5'-phosphate as cofactor.

The protein resides in the cytoplasm. It carries out the reaction (S)-4-amino-5-oxopentanoate = 5-aminolevulinate. It functions in the pathway porphyrin-containing compound metabolism; protoporphyrin-IX biosynthesis; 5-aminolevulinate from L-glutamyl-tRNA(Glu): step 2/2. This chain is Glutamate-1-semialdehyde 2,1-aminomutase 1, found in Anoxybacillus flavithermus (strain DSM 21510 / WK1).